The following is a 235-amino-acid chain: MIFSPPLHHATLIKRYKRFLADVITPEGETFTLHCANTGAMTGCATPGDTVWYSTSDNPKRKYAHSWELTHTQQGDWICVNTLRANTLVREAIEQNLVNELSGYSKISSEVKYGSESSRIDLLLQAEDRANCYIEVKSVTLLQQQRGYFPDAVTLRGQKHLRELLSVVESGQRAVLFFAVLHSGIEQVAPAHHIDERYATLLAQVQQLGVEVVCYGAKLSPDGIYLCDKLPFFID.

It belongs to the SfsA family.

This chain is Sugar fermentation stimulation protein homolog, found in Serratia proteamaculans (strain 568).